The following is a 414-amino-acid chain: uncharacterized protein (414 aa).

Disordered stretches follow at residues 136 to 168 (SSKSMAPTAEKELEKPLENGSELQEGDSLTVPT), 298 to 322 (KNFPDSGMRRAVQTPSPQNKMSYHR), and 350 to 382 (PPHSRPMHGSYNKVHVNKEPKPNLSPDKYMSTS).

This is an uncharacterized protein from Macaca fascicularis (Crab-eating macaque).